Reading from the N-terminus, the 161-residue chain is Small ribosomal subunit protein uS9 (161 aa).

The protein belongs to the universal ribosomal protein uS9 family.

This chain is Small ribosomal subunit protein uS9 (rpsI), found in Rickettsia prowazekii (strain Madrid E).